The primary structure comprises 190 residues: MDKTAKYIQKKTKCEFIQQGDGTIVIYSTLDNIEDHLLFLRDDEKCRFELLVDIFGVDYPDREKRFELIYNLLSIVHNIRVHIKLQLYEDDMPPSVVRIFNTASWFEREVFDMYGIEFSNHPDLRRILTDYGFKGHPMLKDFPLTGYEEVRYDIEAKKVVYNPIDLPQDFRMFDSLSPWEGETAKANTKE.

This sequence belongs to the complex I 30 kDa subunit family. In terms of assembly, NDH-1 is composed of 14 different subunits. Subunits NuoB, C, D, E, F, and G constitute the peripheral sector of the complex.

It localises to the cell membrane. It catalyses the reaction a quinone + NADH + 5 H(+)(in) = a quinol + NAD(+) + 4 H(+)(out). In terms of biological role, NDH-1 shuttles electrons from NADH, via FMN and iron-sulfur (Fe-S) centers, to quinones in the respiratory chain. The immediate electron acceptor for the enzyme in this species is believed to be ubiquinone. Couples the redox reaction to proton translocation (for every two electrons transferred, four hydrogen ions are translocated across the cytoplasmic membrane), and thus conserves the redox energy in a proton gradient. In Wolbachia sp. subsp. Brugia malayi (strain TRS), this protein is NADH-quinone oxidoreductase subunit C.